Reading from the N-terminus, the 148-residue chain is 3-dehydroquinate dehydratase (148 aa).

Tyr23 functions as the Proton acceptor in the catalytic mechanism. 3 residues coordinate substrate: Asn75, His81, and Asp88. His101 serves as the catalytic Proton donor. Substrate-binding positions include 102–103 (LS) and Arg112.

Belongs to the type-II 3-dehydroquinase family. As to quaternary structure, homododecamer.

It catalyses the reaction 3-dehydroquinate = 3-dehydroshikimate + H2O. It participates in metabolic intermediate biosynthesis; chorismate biosynthesis; chorismate from D-erythrose 4-phosphate and phosphoenolpyruvate: step 3/7. Catalyzes a trans-dehydration via an enolate intermediate. In Xanthomonas campestris pv. campestris (strain B100), this protein is 3-dehydroquinate dehydratase.